A 1211-amino-acid polypeptide reads, in one-letter code: MVDVNRFKSMQITLASPSKVRSWSYGEVKKPETINYRTLKPEREGLFDEVIFGPTKDWECACGKYKRIRYKGIVCDRCGVEVTRAKVRRERMGHIELKAPVSHIWYFKGIPSRMGLTLDMSPRALEEVIYFAAYVVIDPKDTPLEPKSLLTEREYREKIQEYGHGSFIAKMGAEAIQDLLKRVDLVTEIAELKEELKTATGQKRIKAVRRLDVLDAFHKSGNKPEWMILNILPVIPPDLRPMVQLDGGRFAASDLNDLYRRVINRNNRLARLLELNAPGIIVQNEKRMLQEAVDALIDNGRRGRPITGPGSRPLKSLSHMLKGKQGRFRQNLLGKRVDFSGRSVIAVGPTLKMYQCGVPREMAIELFKPFVIREIVAREFAGNVKAAKRMVERGDERIWDILEEVIKEHPVLLNRAPTLHRLGIQAFEPVLIDGKALRLHPLVCEAYNADFDGDQMAIHVPLSEEAQAEARLLMLAAEHILNPKDGKPVVTPSQDMVLGNYYLTMEDAGREGEGMVFKDKDEAVMAYRNGYVHLHSRVGIAVDSMPSKLWKDSQRHKIMVTTVGKILFNDIMPEDLPYLQEPNNANLTEGTPDKYFLKPGQNIQEVIDSLPINVPFKKKNLGNIIAETFKRFRTTETSAFLDRLKDLGYYHSTLAGLTVGIADIPVIDNKAEIIEAAHHRVEEINKAFRRGLMTDDDRYVAVTTTWREAKEALEKRLIETQDPKNPIVMMMDSGARGNISNFSQLAGMRGLMAAPNGRIMELPILSNFREGLSVLEMFFSTHGARKGMTDTALKTADSGYLTRRLVDVAQDVIIREDDCGTDRGLLIRAITDGKEVTETLEERLQGRYTRKSVKHPETGEVLIGADQLITEDMARKIVDAGVEEVTIRSVFTCATRHGVCRHCYGINLATGDAVEVGEAVGTIAAQSIGEPGTQLTMRTFHTGGVASNTDITQGLPRIQEIFEARNPKGEAVITEVKGTVIEIEEDASTRTKKVYVQGKTGMGEYVVPFTARMKVEVGDEVNRGAALTEGSIQPKHLLEVRDTLSVETYLLAEVQKVYRSQGVEIGDKHVEVMVRQMLRKVRVMDPGDTDLLPGTLMDIADFTDANKEIVISGGIPATSRPVLMGITKASLETNSFLSAASFQETTRVLTDAAIRGKKDHLLGLKENVIIGKIIPAGTGMVRYRNIEPQAINEVEVIEEAEATEEPAIIKE.

The Zn(2+) site is built by Cys60, Cys62, Cys75, and Cys78. Mg(2+) contacts are provided by Asp450, Asp452, and Asp454. Zn(2+) contacts are provided by Cys819, Cys893, Cys900, and Cys903.

It belongs to the RNA polymerase beta' chain family. In terms of assembly, the RNAP catalytic core consists of 2 alpha, 1 beta, 1 beta' and 1 omega subunit. When a sigma factor is associated with the core the holoenzyme is formed, which can initiate transcription. The cofactor is Mg(2+). Requires Zn(2+) as cofactor.

The enzyme catalyses RNA(n) + a ribonucleoside 5'-triphosphate = RNA(n+1) + diphosphate. DNA-dependent RNA polymerase catalyzes the transcription of DNA into RNA using the four ribonucleoside triphosphates as substrates. This Streptococcus equi subsp. equi (strain 4047) protein is DNA-directed RNA polymerase subunit beta'.